The chain runs to 107 residues: QDVEAGAVSFRKCAPCHAVGEGAANKVGPVLNGLPGRKSGTIAGFNYSDANKNSGITWDKATFKTYITDPRAKIPGTKMVFAGIKNDKEQDDLWAYLSQFGPDGKKK.

Gln-1 carries the post-translational modification Pyrrolidone carboxylic acid. Heme c is bound by residues Cys-13, Cys-16, His-17, and Met-79.

This sequence belongs to the cytochrome c family. Post-translationally, binds 1 heme c group covalently per subunit.

It localises to the periplasm. Its function is as follows. Cytochrome c2 is found mainly in purple, non-sulfur, photosynthetic bacteria where it functions as the electron donor to the oxidized bacteriochlorophyll in the photophosphorylation pathway. However, it may also have a role in the respiratory chain and is found in some non-photosynthetic bacteria. The protein is Cytochrome c2 of Rhodoplanes tepidamans (Rhodoplanes cryptolactis).